The sequence spans 337 residues: GTPase Obg (337 aa).

Residues 1 to 161 enclose the Obg domain; it reads MNLTDNAVIF…FKIKLDFVFL (161 aa). An OBG-type G domain is found at 162–333; sequence ADVGLFGYSN…LINKILLFLE (172 aa). GTP-binding positions include 168 to 175, 193 to 197, 214 to 217, 282 to 285, and 314 to 316; these read GYSNTGRS, FTTLF, DIPS, NKTD, and SLN. Residues Ser175 and Thr195 each contribute to the Mg(2+) site.

Belongs to the TRAFAC class OBG-HflX-like GTPase superfamily. OBG GTPase family. Monomer. Mg(2+) serves as cofactor.

It is found in the cytoplasm. Functionally, an essential GTPase which binds GTP, GDP and possibly (p)ppGpp with moderate affinity, with high nucleotide exchange rates and a fairly low GTP hydrolysis rate. Plays a role in control of the cell cycle, stress response, ribosome biogenesis and in those bacteria that undergo differentiation, in morphogenesis control. The polypeptide is GTPase Obg (Wigglesworthia glossinidia brevipalpis).